Reading from the N-terminus, the 78-residue chain is Large ribosomal subunit protein uL24 (78 aa).

Belongs to the universal ribosomal protein uL24 family. As to quaternary structure, part of the 50S ribosomal subunit.

In terms of biological role, one of two assembly initiator proteins, it binds directly to the 5'-end of the 23S rRNA, where it nucleates assembly of the 50S subunit. Its function is as follows. One of the proteins that surrounds the polypeptide exit tunnel on the outside of the subunit. The sequence is that of Large ribosomal subunit protein uL24 from Campylobacter curvus (strain 525.92).